A 268-amino-acid chain; its full sequence is Interleukin-1 beta (268 aa).

The propeptide occupies 1-116 (MATVPELNCE…WDDDDLLVCD (116 aa)).

The protein belongs to the IL-1 family. As to quaternary structure, monomer. In its precursor form, weakly interacts with full-length MEFV; the mature cytokine does not interact at all. Interacts with integrins ITGAV:ITGBV and ITGA5:ITGB1; integrin-binding is required for IL1B signaling. Interacts with cargo receptor TMED10; the interaction is direct and is required for the secretion of IL1B mature form. Interacts with HSP90AB1; the interaction facilitates cargo translocation into the ERGIC. Interacts with HSP90B1; the interaction facilitates cargo translocation into the ERGIC.

The protein localises to the cytoplasm. It is found in the cytosol. It localises to the secreted. The protein resides in the lysosome. Its subcellular location is the extracellular exosome. Functionally, potent pro-inflammatory cytokine. Initially discovered as the major endogenous pyrogen, induces prostaglandin synthesis, neutrophil influx and activation, T-cell activation and cytokine production, B-cell activation and antibody production, and fibroblast proliferation and collagen production. Promotes Th17 differentiation of T-cells. Synergizes with IL12/interleukin-12 to induce IFNG synthesis from T-helper 1 (Th1) cells. Plays a role in angiogenesis by inducing VEGF production synergistically with TNF and IL6. Involved in transduction of inflammation downstream of pyroptosis: its mature form is specifically released in the extracellular milieu by passing through the gasdermin-D (GSDMD) pore. The polypeptide is Interleukin-1 beta (Rattus norvegicus (Rat)).